The sequence spans 343 residues: Holliday junction branch migration complex subunit RuvB (343 aa).

The large ATPase domain (RuvB-L) stretch occupies residues 4 to 193 (TDNLTAAQPQ…FGIVSRLEFY (190 aa)). Residues L32, R33, G74, K77, T78, T79, 140–142 (EDY), R183, Y193, and R230 each bind ATP. Position 78 (T78) interacts with Mg(2+). The tract at residues 194–264 (ENRDLTTIVS…VADAALSMLD (71 aa)) is small ATPAse domain (RuvB-S). The segment at 267–343 (AQGLDVMDRK…YLHFGLPVEK (77 aa)) is head domain (RuvB-H). DNA is bound by residues R322 and R327.

It belongs to the RuvB family. Homohexamer. Forms an RuvA(8)-RuvB(12)-Holliday junction (HJ) complex. HJ DNA is sandwiched between 2 RuvA tetramers; dsDNA enters through RuvA and exits via RuvB. An RuvB hexamer assembles on each DNA strand where it exits the tetramer. Each RuvB hexamer is contacted by two RuvA subunits (via domain III) on 2 adjacent RuvB subunits; this complex drives branch migration. In the full resolvosome a probable DNA-RuvA(4)-RuvB(12)-RuvC(2) complex forms which resolves the HJ.

The protein localises to the cytoplasm. It catalyses the reaction ATP + H2O = ADP + phosphate + H(+). In terms of biological role, the RuvA-RuvB-RuvC complex processes Holliday junction (HJ) DNA during genetic recombination and DNA repair, while the RuvA-RuvB complex plays an important role in the rescue of blocked DNA replication forks via replication fork reversal (RFR). RuvA specifically binds to HJ cruciform DNA, conferring on it an open structure. The RuvB hexamer acts as an ATP-dependent pump, pulling dsDNA into and through the RuvAB complex. RuvB forms 2 homohexamers on either side of HJ DNA bound by 1 or 2 RuvA tetramers; 4 subunits per hexamer contact DNA at a time. Coordinated motions by a converter formed by DNA-disengaged RuvB subunits stimulates ATP hydrolysis and nucleotide exchange. Immobilization of the converter enables RuvB to convert the ATP-contained energy into a lever motion, pulling 2 nucleotides of DNA out of the RuvA tetramer per ATP hydrolyzed, thus driving DNA branch migration. The RuvB motors rotate together with the DNA substrate, which together with the progressing nucleotide cycle form the mechanistic basis for DNA recombination by continuous HJ branch migration. Branch migration allows RuvC to scan DNA until it finds its consensus sequence, where it cleaves and resolves cruciform DNA. This Neisseria gonorrhoeae (strain NCCP11945) protein is Holliday junction branch migration complex subunit RuvB.